A 380-amino-acid chain; its full sequence is Sialidase-2 (380 aa).

An FRIP motif motif is present at residues 20-23 (YRIP). Arg-21 and Arg-41 together coordinate substrate. Asp-46 (proton acceptor) is an active-site residue. A BNR 1 repeat occupies 127–138 (VTSTDHGRTWSS). The substrate site is built by Tyr-179 and Tyr-181. One copy of the BNR 2 repeat lies at 197-208 (FLSHDHGRTWAR). Substrate contacts are provided by Glu-218, Arg-237, and Arg-304. Catalysis depends on Tyr-334, which acts as the Nucleophile. Glu-355 is an active-site residue.

Belongs to the glycosyl hydrolase 33 family. In terms of tissue distribution, expressed in skeletal muscle, fetal liver and embryonic carcinoma cell line NT2-D1.

Its subcellular location is the cytoplasm. The protein resides in the cytosol. The enzyme catalyses Hydrolysis of alpha-(2-&gt;3)-, alpha-(2-&gt;6)-, alpha-(2-&gt;8)- glycosidic linkages of terminal sialic acid residues in oligosaccharides, glycoproteins, glycolipids, colominic acid and synthetic substrates.. The catalysed reaction is a ganglioside GD1a + H2O = a ganglioside GM1 + N-acetylneuraminate. It carries out the reaction a ganglioside GM1 + H2O = a ganglioside GA1 + N-acetylneuraminate. It catalyses the reaction a ganglioside GT1b + H2O = a ganglioside GD1b + N-acetylneuraminate. The enzyme catalyses a ganglioside GD1b + H2O = a ganglioside GM1 + N-acetylneuraminate. The catalysed reaction is a ganglioside GD3 + H2O = a ganglioside GM3 + N-acetylneuraminate. It carries out the reaction a ganglioside GM3 + H2O = a beta-D-galactosyl-(1-&gt;4)-beta-D-glucosyl-(1&lt;-&gt;1)-ceramide + N-acetylneuraminate. It catalyses the reaction a ganglioside GM2 + H2O = a ganglioside GA2 + N-acetylneuraminate. The enzyme catalyses a neolactoside IV(3)-alpha-NeuAc-nLc4Cer(d18:1(4E)) + H2O = a neolactoside nLc4Cer(d18:1(4E)) + N-acetylneuraminate. The catalysed reaction is N-acetyl-alpha-neuraminosyl-(2-&gt;3)-beta-D-galactosyl-(1-&gt;4)-D-glucose + H2O = lactose + N-acetylneuraminate. Its function is as follows. Exo-alpha-sialidase that catalyzes the hydrolytic cleavage of the terminal sialic acid (N-acetylneuraminic acid, Neu5Ac) of a glycan moiety in the catabolism of glycolipids, glycoproteins and oligosacharides. Recognizes sialyl linkage positions of the glycan moiety as well as the supramolecular organization of the sialoglycoconjugate. Displays preference for alpha-(2-&gt;3)-sialylated GD1a and GT1B gangliosides over alpha-(2-&gt;8)-sialylated GD1b, in both monomeric forms and micelles. Hydrolyzes monomeric GM1 ganglioside, but has no activity toward the miscellar form. Has lower sialidase activity for glycoproteins such as fetuin and TF/transferrin that carry a mixture of alpha-(2-&gt;3) and alpha-(2-&gt;6)-sialyl linkages. Cleaves milk oligosaccharide alpha-(2-&gt;3)-sialyllactose, but is inactive toward alpha-(2-&gt;6)-sialyllactose isomer. Has no activity toward colominic acid, a homomer of alpha-(2-&gt;8)-linked Neu5Ac residues. The sequence is that of Sialidase-2 (NEU2) from Homo sapiens (Human).